A 117-amino-acid polypeptide reads, in one-letter code: Large ribosomal subunit protein uL18 (117 aa).

This sequence belongs to the universal ribosomal protein uL18 family. In terms of assembly, part of the 50S ribosomal subunit; part of the 5S rRNA/L5/L18/L25 subcomplex. Contacts the 5S and 23S rRNAs.

Its function is as follows. This is one of the proteins that bind and probably mediate the attachment of the 5S RNA into the large ribosomal subunit, where it forms part of the central protuberance. This is Large ribosomal subunit protein uL18 from Nitrosococcus oceani (strain ATCC 19707 / BCRC 17464 / JCM 30415 / NCIMB 11848 / C-107).